We begin with the raw amino-acid sequence, 167 residues long: Small ribosomal subunit protein uS5 (167 aa).

The S5 DRBM domain maps to 12-75; the sequence is LQEKLIAVNR…EKARRNMVTV (64 aa).

The protein belongs to the universal ribosomal protein uS5 family. Part of the 30S ribosomal subunit. Contacts proteins S4 and S8.

In terms of biological role, with S4 and S12 plays an important role in translational accuracy. Functionally, located at the back of the 30S subunit body where it stabilizes the conformation of the head with respect to the body. This Shewanella denitrificans (strain OS217 / ATCC BAA-1090 / DSM 15013) protein is Small ribosomal subunit protein uS5.